The following is a 368-amino-acid chain: 3-isopropylmalate dehydrogenase (368 aa).

Residue 79–92 participates in NAD(+) binding; sequence GPRYEGLPWDLRPE. Positions 99, 109, 138, and 228 each coordinate substrate. The Mg(2+) site is built by Asp-228, Asp-252, and Asp-256. 292 to 304 lines the NAD(+) pocket; it reads GSAPDIAGQDRAN.

This sequence belongs to the isocitrate and isopropylmalate dehydrogenases family. LeuB type 1 subfamily. Homodimer. Mg(2+) serves as cofactor. The cofactor is Mn(2+).

The protein resides in the cytoplasm. It carries out the reaction (2R,3S)-3-isopropylmalate + NAD(+) = 4-methyl-2-oxopentanoate + CO2 + NADH. Its pathway is amino-acid biosynthesis; L-leucine biosynthesis; L-leucine from 3-methyl-2-oxobutanoate: step 3/4. Its function is as follows. Catalyzes the oxidation of 3-carboxy-2-hydroxy-4-methylpentanoate (3-isopropylmalate) to 3-carboxy-4-methyl-2-oxopentanoate. The product decarboxylates to 4-methyl-2 oxopentanoate. In Symbiobacterium thermophilum (strain DSM 24528 / JCM 14929 / IAM 14863 / T), this protein is 3-isopropylmalate dehydrogenase.